A 494-amino-acid chain; its full sequence is Probable cytochrome P450 313a4 (494 aa).

Cysteine 440 lines the heme pocket.

The protein belongs to the cytochrome P450 family. It depends on heme as a cofactor.

The protein resides in the endoplasmic reticulum membrane. The protein localises to the microsome membrane. Its function is as follows. May be involved in the metabolism of insect hormones and in the breakdown of synthetic insecticides. The chain is Probable cytochrome P450 313a4 (Cyp313a4) from Drosophila melanogaster (Fruit fly).